Consider the following 83-residue polypeptide: Short neurotoxin OKI-Ed (83 aa).

A signal peptide spans 1–21; the sequence is MKTLLLTLVVVTIVCLDLGYT. Intrachain disulfides connect cysteine 24–cysteine 45, cysteine 38–cysteine 62, cysteine 64–cysteine 75, and cysteine 76–cysteine 81.

It belongs to the three-finger toxin family. Short-chain subfamily. Type I alpha-neurotoxin sub-subfamily. As to expression, expressed by the venom gland.

Its subcellular location is the secreted. Its function is as follows. Binds to muscle nicotinic acetylcholine receptor (nAChR) and inhibit acetylcholine from binding to the receptor, thereby impairing neuromuscular transmission. The protein is Short neurotoxin OKI-Ed of Laticauda semifasciata (Black-banded sea krait).